A 236-amino-acid polypeptide reads, in one-letter code: Flagellar L-ring protein (236 aa).

The first 16 residues, 1-16, serve as a signal peptide directing secretion; sequence MRMQLTAVLAASLLAG. A lipid anchor (N-palmitoyl cysteine) is attached at cysteine 17. Cysteine 17 is lipidated: S-diacylglycerol cysteine.

The protein belongs to the FlgH family. In terms of assembly, the basal body constitutes a major portion of the flagellar organelle and consists of four rings (L,P,S, and M) mounted on a central rod.

It is found in the cell outer membrane. Its subcellular location is the bacterial flagellum basal body. Functionally, assembles around the rod to form the L-ring and probably protects the motor/basal body from shearing forces during rotation. This is Flagellar L-ring protein from Sinorhizobium fredii (strain NBRC 101917 / NGR234).